We begin with the raw amino-acid sequence, 91 residues long: UPF0223 protein SAR1071 (91 aa).

Belongs to the UPF0223 family.

The chain is UPF0223 protein SAR1071 from Staphylococcus aureus (strain MRSA252).